The following is a 452-amino-acid chain: Histone acetyltransferase type B subunit 2 (452 aa).

WD repeat units lie at residues 155–195, 205–245, 256–296, 300–340, 344–384, and 401–441; these read YEDG…NSKE, HHTK…SDGS, HHDA…NKAA, KESR…TPIS, SHCD…DDLS, and GHSS…SNDE.

The protein belongs to the WD repeat RBAP46/RBAP48/MSI1 family. In terms of assembly, component of the HAT-B complex composed of at least HAT1 and HAT2. The HAT-B complex binds to histone H4 tail.

The protein localises to the cytoplasm. The protein resides in the nucleus. Functionally, regulatory subunit of the histone acetylase B (HAT-B) complex. The complex acetylates 'Lys-12' of histone H4 which is required for telomeric silencing. In Yarrowia lipolytica (strain CLIB 122 / E 150) (Yeast), this protein is Histone acetyltransferase type B subunit 2 (HAT2).